The chain runs to 596 residues: Actin-histidine N-methyltransferase (596 aa).

Residues Arg75, Glu104–Tyr106, Arg254, Asp275–His279, and Asn325–Phe327 each bind S-adenosyl-L-methionine. In terms of domain architecture, SET spans Asp94–Gly314. The disordered stretch occupies residues Gln556–Lys596. Positions Lys575–Lys596 are enriched in basic and acidic residues.

This sequence belongs to the class V-like SAM-binding methyltransferase superfamily. SETD3 actin-histidine methyltransferase family.

The protein localises to the cytoplasm. The enzyme catalyses L-histidyl-[protein] + S-adenosyl-L-methionine = N(tele)-methyl-L-histidyl-[protein] + S-adenosyl-L-homocysteine + H(+). In terms of biological role, protein-histidine N-methyltransferase that specifically mediates 3-methylhistidine (tele-methylhistidine) methylation of actin at 'His-73'. Does not have protein-lysine N-methyltransferase activity and probably only catalyzes histidine methylation of actin. In Danio rerio (Zebrafish), this protein is Actin-histidine N-methyltransferase.